The following is a 599-amino-acid chain: Aspartate--tRNA(Asp/Asn) ligase (599 aa).

E173 contributes to the L-aspartate binding site. The tract at residues 197 to 200 (QLYK) is aspartate. Position 219 (R219) interacts with L-aspartate. ATP contacts are provided by residues 219-221 (RDE) and Q228. H451 lines the L-aspartate pocket. Position 484 (E484) interacts with ATP. R491 is a binding site for L-aspartate. An ATP-binding site is contributed by 536 to 539 (GLDR).

It belongs to the class-II aminoacyl-tRNA synthetase family. Type 1 subfamily. In terms of assembly, homodimer.

The protein resides in the cytoplasm. It carries out the reaction tRNA(Asx) + L-aspartate + ATP = L-aspartyl-tRNA(Asx) + AMP + diphosphate. Aspartyl-tRNA synthetase with relaxed tRNA specificity since it is able to aspartylate not only its cognate tRNA(Asp) but also tRNA(Asn). Reaction proceeds in two steps: L-aspartate is first activated by ATP to form Asp-AMP and then transferred to the acceptor end of tRNA(Asp/Asn). This is Aspartate--tRNA(Asp/Asn) ligase from Methylococcus capsulatus (strain ATCC 33009 / NCIMB 11132 / Bath).